The chain runs to 527 residues: Plant-specific TFIIB-related protein PTF2 (527 aa).

The TFIIB-type zinc-finger motif lies at 1–30; the sequence is MRCKRCNGSNFERDEDTGNSYCGGCGTLRE.

In terms of assembly, can form homodimer. Interacts with TBP2. As to expression, expressed in shoot apical meristems, root tips, primordia of lateral roots, inflorescences, developing pollen grains and embryos.

Its subcellular location is the nucleus. Plant-specific TFIIB-related protein that plays important roles in pollen germination and embryogenesis, possibly by regulating gene expression through interaction with TBP2 and the subunits of RNA polymerases. Binds double-stranded DNA in vitro. The chain is Plant-specific TFIIB-related protein PTF2 from Arabidopsis thaliana (Mouse-ear cress).